We begin with the raw amino-acid sequence, 214 residues long: Ras-related protein Rab-17 (214 aa).

The residue at position 29 (S29) is a Phosphoserine. 4 residues coordinate GTP: G31, K32, T33, and T50. Residues T33, T50, and D73 each contribute to the Mg(2+) site. The Switch 1 motif lies at 43-54 (DFSNVLPTVGCA). The short motif at 75–91 (AGQEKYQSVCHLYFRGA) is the Switch 2 element. Residues G76, N132, K133, D135, and A163 each coordinate GTP. The tract at residues 183 to 204 (RAGDTGSSRPQEGEAVALNQEP) is disordered. Residues C211 and C212 are each lipidated (S-geranylgeranyl cysteine).

It belongs to the small GTPase superfamily. Rab family. The cofactor is Mg(2+). Expressed in kidney, liver, and intestine mainly by epithelial cells. Expressed in hippocampus (at protein level).

It is found in the recycling endosome membrane. It localises to the melanosome. The protein resides in the cell projection. Its subcellular location is the dendrite. The catalysed reaction is GTP + H2O = GDP + phosphate + H(+). Regulated by guanine nucleotide exchange factors (GEFs) which promote the exchange of bound GDP for free GTP. Regulated by GTPase activating proteins (GAPs) which increase the GTP hydrolysis activity. Inhibited by GDP dissociation inhibitors (GDIs). Its function is as follows. The small GTPases Rab are key regulators of intracellular membrane trafficking, from the formation of transport vesicles to their fusion with membranes. Rabs cycle between an inactive GDP-bound form and an active GTP-bound form that is able to recruit to membranes different set of downstream effectors directly responsible for vesicle formation, movement, tethering and fusion. RAB17 is involved in transcytosis, the directed movement of endocytosed material through the cell and its exocytosis from the plasma membrane at the opposite side. Mainly observed in epithelial cells, transcytosis mediates, for instance, the transcellular transport of immunoglobulins from the basolateral surface to the apical surface. Most probably controls membrane trafficking through apical recycling endosomes in a post-endocytic step of transcytosis. Required for melanosome transport and release from melanocytes, it also regulates dendrite and dendritic spine development. May also play a role in cell migration. The chain is Ras-related protein Rab-17 from Mus musculus (Mouse).